The chain runs to 234 residues: N-(5'-phosphoribosyl)anthranilate isomerase (234 aa).

The tract at residues 211-234 (RAASSSPRPVDGESPAFQRSEKAG) is disordered.

Belongs to the TrpF family.

The catalysed reaction is N-(5-phospho-beta-D-ribosyl)anthranilate = 1-(2-carboxyphenylamino)-1-deoxy-D-ribulose 5-phosphate. It functions in the pathway amino-acid biosynthesis; L-tryptophan biosynthesis; L-tryptophan from chorismate: step 3/5. The chain is N-(5'-phosphoribosyl)anthranilate isomerase from Afipia carboxidovorans (strain ATCC 49405 / DSM 1227 / KCTC 32145 / OM5) (Oligotropha carboxidovorans).